The primary structure comprises 148 residues: Lysozyme C (148 aa).

A signal peptide spans 1–18 (MKAVIILGLVLLSVTVQG). Residues 19–148 (KIFERCELAR…VSQYVQGCGV (130 aa)) form the C-type lysozyme domain. 4 cysteine pairs are disulfide-bonded: Cys24–Cys146, Cys48–Cys134, Cys83–Cys99, and Cys95–Cys113. Residues Glu53 and Asp71 contribute to the active site.

Belongs to the glycosyl hydrolase 22 family. As to quaternary structure, monomer.

Its subcellular location is the secreted. It catalyses the reaction Hydrolysis of (1-&gt;4)-beta-linkages between N-acetylmuramic acid and N-acetyl-D-glucosamine residues in a peptidoglycan and between N-acetyl-D-glucosamine residues in chitodextrins.. Its function is as follows. Lysozymes have primarily a bacteriolytic function; those in tissues and body fluids are associated with the monocyte-macrophage system and enhance the activity of immunoagents. The sequence is that of Lysozyme C (LYZ) from Papio anubis (Olive baboon).